A 252-amino-acid polypeptide reads, in one-letter code: 5'-nucleotidase SurE (252 aa).

Positions 8, 9, 39, and 95 each coordinate a divalent metal cation.

It belongs to the SurE nucleotidase family. A divalent metal cation serves as cofactor.

It is found in the cytoplasm. The catalysed reaction is a ribonucleoside 5'-phosphate + H2O = a ribonucleoside + phosphate. In terms of biological role, nucleotidase that shows phosphatase activity on nucleoside 5'-monophosphates. In Thermoanaerobacter sp. (strain X514), this protein is 5'-nucleotidase SurE.